The sequence spans 152 residues: Probable spermine N(1)-acetyltransferase (152 aa).

The region spanning 3–152 (INIKAVTDDN…NGEKVMVKEL (150 aa)) is the N-acetyltransferase domain. Acetyl-CoA contacts are provided by residues 82–84 (FFI), 89–95 (QGKGLGK), and 122–131 (NIHAIRLYQR). The Proton donor role is filled by Tyr-129.

Belongs to the acetyltransferase family.

The enzyme catalyses an alkane-alpha,omega-diamine + acetyl-CoA = an N-acetylalkane-alpha,omega-diamine + CoA + H(+). It carries out the reaction spermine + acetyl-CoA = N(1)-acetylspermine + CoA + H(+). The protein operates within amine and polyamine degradation; spermine degradation. In terms of biological role, probably acetylates spermine to N(1)-acetylspermine. This Bacillus subtilis subsp. natto (strain BEST195) protein is Probable spermine N(1)-acetyltransferase.